Consider the following 440-residue polypeptide: Probable D-serine dehydratase (440 aa).

Residue K111 is modified to N6-(pyridoxal phosphate)lysine.

It belongs to the serine/threonine dehydratase family. DsdA subfamily. It depends on pyridoxal 5'-phosphate as a cofactor.

The enzyme catalyses D-serine = pyruvate + NH4(+). In Rhizobium leguminosarum bv. trifolii (strain WSM2304), this protein is Probable D-serine dehydratase.